We begin with the raw amino-acid sequence, 152 residues long: UPF0178 protein SAS0646 (152 aa).

Belongs to the UPF0178 family.

The sequence is that of UPF0178 protein SAS0646 from Staphylococcus aureus (strain MSSA476).